A 262-amino-acid polypeptide reads, in one-letter code: Acyl-[acyl-carrier-protein]--UDP-N-acetylglucosamine O-acyltransferase (262 aa).

The protein belongs to the transferase hexapeptide repeat family. LpxA subfamily. Homotrimer.

It is found in the cytoplasm. The catalysed reaction is a (3R)-hydroxyacyl-[ACP] + UDP-N-acetyl-alpha-D-glucosamine = a UDP-3-O-[(3R)-3-hydroxyacyl]-N-acetyl-alpha-D-glucosamine + holo-[ACP]. Its pathway is glycolipid biosynthesis; lipid IV(A) biosynthesis; lipid IV(A) from (3R)-3-hydroxytetradecanoyl-[acyl-carrier-protein] and UDP-N-acetyl-alpha-D-glucosamine: step 1/6. Its function is as follows. Involved in the biosynthesis of lipid A, a phosphorylated glycolipid that anchors the lipopolysaccharide to the outer membrane of the cell. The sequence is that of Acyl-[acyl-carrier-protein]--UDP-N-acetylglucosamine O-acyltransferase from Erwinia tasmaniensis (strain DSM 17950 / CFBP 7177 / CIP 109463 / NCPPB 4357 / Et1/99).